A 274-amino-acid polypeptide reads, in one-letter code: Phosphate import ATP-binding protein PstB (274 aa).

The ABC transporter domain maps to 28–269 (VTVRDLNFYY…PNDRRTQDYI (242 aa)). 60 to 67 (GPSGCGKS) serves as a coordination point for ATP.

It belongs to the ABC transporter superfamily. Phosphate importer (TC 3.A.1.7) family. The complex is composed of two ATP-binding proteins (PstB), two transmembrane proteins (PstC and PstA) and a solute-binding protein (PstS).

Its subcellular location is the cell inner membrane. It carries out the reaction phosphate(out) + ATP + H2O = ADP + 2 phosphate(in) + H(+). In terms of biological role, part of the ABC transporter complex PstSACB involved in phosphate import. Responsible for energy coupling to the transport system. This is Phosphate import ATP-binding protein PstB from Rhodopseudomonas palustris (strain HaA2).